A 441-amino-acid chain; its full sequence is Glutamate-1-semialdehyde 2,1-aminomutase (441 aa).

The residue at position 275 (Lys275) is an N6-(pyridoxal phosphate)lysine.

This sequence belongs to the class-III pyridoxal-phosphate-dependent aminotransferase family. HemL subfamily. As to quaternary structure, homodimer. Pyridoxal 5'-phosphate is required as a cofactor.

The protein resides in the cytoplasm. It carries out the reaction (S)-4-amino-5-oxopentanoate = 5-aminolevulinate. It participates in porphyrin-containing compound metabolism; protoporphyrin-IX biosynthesis; 5-aminolevulinate from L-glutamyl-tRNA(Glu): step 2/2. This Deinococcus deserti (strain DSM 17065 / CIP 109153 / LMG 22923 / VCD115) protein is Glutamate-1-semialdehyde 2,1-aminomutase.